A 113-amino-acid polypeptide reads, in one-letter code: Large ribosomal subunit protein uL22 (113 aa).

It belongs to the universal ribosomal protein uL22 family. In terms of assembly, part of the 50S ribosomal subunit.

Its function is as follows. This protein binds specifically to 23S rRNA; its binding is stimulated by other ribosomal proteins, e.g. L4, L17, and L20. It is important during the early stages of 50S assembly. It makes multiple contacts with different domains of the 23S rRNA in the assembled 50S subunit and ribosome. The globular domain of the protein is located near the polypeptide exit tunnel on the outside of the subunit, while an extended beta-hairpin is found that lines the wall of the exit tunnel in the center of the 70S ribosome. This Herpetosiphon aurantiacus (strain ATCC 23779 / DSM 785 / 114-95) protein is Large ribosomal subunit protein uL22.